The sequence spans 387 residues: S-adenosylmethionine synthase (387 aa).

An ATP-binding site is contributed by H16. Mg(2+) is bound at residue D18. A K(+)-binding site is contributed by E44. Residues E57 and Q100 each coordinate L-methionine. Residues 100–110 (QSPDIAQGVDR) form a flexible loop region. Residues 167–169 (DAK), 232–233 (RF), D241, 247–248 (RK), A264, and K268 contribute to the ATP site. L-methionine is bound at residue D241. K272 contacts L-methionine.

Belongs to the AdoMet synthase family. In terms of assembly, homotetramer; dimer of dimers. Requires Mg(2+) as cofactor. K(+) is required as a cofactor.

The protein localises to the cytoplasm. It carries out the reaction L-methionine + ATP + H2O = S-adenosyl-L-methionine + phosphate + diphosphate. The protein operates within amino-acid biosynthesis; S-adenosyl-L-methionine biosynthesis; S-adenosyl-L-methionine from L-methionine: step 1/1. Catalyzes the formation of S-adenosylmethionine (AdoMet) from methionine and ATP. The overall synthetic reaction is composed of two sequential steps, AdoMet formation and the subsequent tripolyphosphate hydrolysis which occurs prior to release of AdoMet from the enzyme. This is S-adenosylmethionine synthase from Cupriavidus metallidurans (strain ATCC 43123 / DSM 2839 / NBRC 102507 / CH34) (Ralstonia metallidurans).